The primary structure comprises 88 residues: Small ribosomal subunit protein bS20 (88 aa).

It belongs to the bacterial ribosomal protein bS20 family.

Binds directly to 16S ribosomal RNA. The polypeptide is Small ribosomal subunit protein bS20 (Clostridium kluyveri (strain NBRC 12016)).